An 83-amino-acid polypeptide reads, in one-letter code: Exodeoxyribonuclease 7 small subunit (83 aa).

This sequence belongs to the XseB family. As to quaternary structure, heterooligomer composed of large and small subunits.

The protein localises to the cytoplasm. The catalysed reaction is Exonucleolytic cleavage in either 5'- to 3'- or 3'- to 5'-direction to yield nucleoside 5'-phosphates.. Bidirectionally degrades single-stranded DNA into large acid-insoluble oligonucleotides, which are then degraded further into small acid-soluble oligonucleotides. This Bradyrhizobium sp. (strain BTAi1 / ATCC BAA-1182) protein is Exodeoxyribonuclease 7 small subunit.